The chain runs to 705 residues: Beta-xylosidase (705 aa).

It belongs to the glycosyl hydrolase 52 family.

The enzyme catalyses Hydrolysis of (1-&gt;4)-beta-D-xylans, to remove successive D-xylose residues from the non-reducing termini.. Its pathway is glycan degradation; xylan degradation. The polypeptide is Beta-xylosidase (xylA) (Geobacillus stearothermophilus (Bacillus stearothermophilus)).